Consider the following 181-residue polypeptide: Terminase small subunit (181 aa).

A winged helix-turn-helix (wHTH) region spans residues 1–29; it reads MEVNKKQLADIFGASIRTIQNWQEQGMPV. 31-36 contacts ATP; the sequence is RGGGKG. Positions 52-109 form a coiled coil; sequence ERDAEIENEKLRREVEELRQASEADLQPGTIEYERHRLTRAQADAQELKNARDSAEVV. Residues 110 to 140 are self-assembly; it reads ETAFCTFVLSRIAGEIASILDGLPLSVQRRF. Residues 141–180 form a binding to terminase large subunit region; the sequence is PELENRHVDFLKRDIIKAMNKAAALDELIPGLLSEYIEQS.

It belongs to the terminase small subunit family. As to quaternary structure, homodimer. Heterotrimer of two small and one large terminase subunits. The catalytically competent terminase is composed of a tetramer of heterotrimers. The tetramer forms a ring structure large enough to encircle duplex DNA. Host IHFA/IHFB induces bending of viral DNA to facilitate the assembly of the terminase tetramer of heterotrimers. Interacts (via C-terminus) with the terminase large subunit (via N-terminus).

The protein localises to the host cytoplasm. The catalysed reaction is ATP + H2O = ADP + phosphate + H(+). The small subunit is responsible for the binding to multiple recognition elements within the packaging initiation site cos. The terminase lies at a unique vertex of the procapsid and is composed of two subunits, a small terminase subunit involved in viral DNA recognition (binding to packaging sequence cos), and a large terminase subunit possessing endonucleolytic and ATPase activities (DNA maturation and packaging). The terminase binds, cooperatively with the host factor IHFA/IHFB, to the cos site at the junction of adjacent viral genomes in the concatemeric DNA. The endonuclease activity of the large subunit cleave the viral DNA generating 5'overhangs of 12 bp in length. The terminase remains bound to the left end of the genome to be packaged, forming a stable DNA-terminase complex. In a reaction facilitated by the viral assembly catalyst gpFI, the DNA-terminase complex binds to the portal of the procapsid and the terminase packages the viral DNA into the procapsid until the next cos site on the concatemer reaches the complex ('unit length' packaging). The downstream cos site is then cut generating the mature right end of the genome, the heterotrimer undocks from the DNA-filled head and remains bound to the left end of concatemer's next genome. In Escherichia phage lambda (Bacteriophage lambda), this protein is Terminase small subunit (Nu1).